A 199-amino-acid polypeptide reads, in one-letter code: dITP/XTP pyrophosphatase (199 aa).

Position 7 to 12 (7 to 12) interacts with substrate; sequence SANKGK. Mg(2+) is bound by residues aspartate 38 and aspartate 73. The active-site Proton acceptor is aspartate 73. Substrate-binding positions include serine 74, 155–158, lysine 178, and 183–184; these read FGYD and HR.

This sequence belongs to the HAM1 NTPase family. In terms of assembly, homodimer. Requires Mg(2+) as cofactor.

The catalysed reaction is XTP + H2O = XMP + diphosphate + H(+). It catalyses the reaction dITP + H2O = dIMP + diphosphate + H(+). The enzyme catalyses ITP + H2O = IMP + diphosphate + H(+). Its function is as follows. Pyrophosphatase that catalyzes the hydrolysis of nucleoside triphosphates to their monophosphate derivatives, with a high preference for the non-canonical purine nucleotides XTP (xanthosine triphosphate), dITP (deoxyinosine triphosphate) and ITP. Seems to function as a house-cleaning enzyme that removes non-canonical purine nucleotides from the nucleotide pool, thus preventing their incorporation into DNA/RNA and avoiding chromosomal lesions. The sequence is that of dITP/XTP pyrophosphatase from Aliarcobacter butzleri (strain RM4018) (Arcobacter butzleri).